The sequence spans 425 residues: Pleckstrin homology domain-containing family A member 2 (425 aa).

A PH 1 domain is found at 7–113 (QNRICGFLDI…WVEALNQASK (107 aa)). K141 is covalently cross-linked (Glycyl lysine isopeptide (Lys-Gly) (interchain with G-Cter in SUMO2)). S184 bears the Phosphoserine mark. Positions 198–298 (PLIKSGYCVK…WIKEIGAAVQ (101 aa)) constitute a PH 2 domain. Phosphoserine occurs at positions 314 and 349. The segment at 374-410 (AEDSLFTPRLGESSTSAVLPSSRIRHRSEPQHPKEKP) is disordered. A compositionally biased stretch (basic and acidic residues) spans 400–410 (RSEPQHPKEKP).

In terms of assembly, binds MPDZ and PTPN13.

It localises to the cytoplasm. It is found in the cell membrane. The protein localises to the nucleus. Its function is as follows. Binds specifically to phosphatidylinositol 3,4-diphosphate (PtdIns3,4P2), but not to other phosphoinositides. May recruit other proteins to the plasma membrane. The sequence is that of Pleckstrin homology domain-containing family A member 2 (PLEKHA2) from Bos taurus (Bovine).